The following is a 251-amino-acid chain: GTP cyclohydrolase 1 type 2 homolog (251 aa).

A divalent metal cation-binding residues include H63, H64, D101, H219, and E223.

The protein belongs to the GTP cyclohydrolase I type 2/NIF3 family. Toroid-shaped homohexamer. In the hexamer, 3 dimers assemble to form a ring-like structure surrounding a central hole.

This chain is GTP cyclohydrolase 1 type 2 homolog, found in Haemophilus influenzae (strain ATCC 51907 / DSM 11121 / KW20 / Rd).